A 66-amino-acid polypeptide reads, in one-letter code: Large ribosomal subunit protein bL31 (66 aa).

Zn(2+)-binding residues include C16, C18, C36, and C39.

The protein belongs to the bacterial ribosomal protein bL31 family. Type A subfamily. Part of the 50S ribosomal subunit. The cofactor is Zn(2+).

Binds the 23S rRNA. In Desulforamulus reducens (strain ATCC BAA-1160 / DSM 100696 / MI-1) (Desulfotomaculum reducens), this protein is Large ribosomal subunit protein bL31.